We begin with the raw amino-acid sequence, 200 residues long: Pyridoxine/pyridoxamine 5'-phosphate oxidase (200 aa).

FMN is bound by residues 48–53 (RMVLLK), 63–64 (YT), lysine 70, and glutamine 92. A substrate-binding site is contributed by lysine 53. Residues tyrosine 110, arginine 114, and serine 118 each contribute to the substrate site. FMN contacts are provided by residues 127–128 (QS) and tryptophan 171. Residue 177–179 (RLH) coordinates substrate. Arginine 181 contacts FMN.

This sequence belongs to the pyridoxamine 5'-phosphate oxidase family. In terms of assembly, homodimer. It depends on FMN as a cofactor.

It carries out the reaction pyridoxamine 5'-phosphate + O2 + H2O = pyridoxal 5'-phosphate + H2O2 + NH4(+). The catalysed reaction is pyridoxine 5'-phosphate + O2 = pyridoxal 5'-phosphate + H2O2. It functions in the pathway cofactor metabolism; pyridoxal 5'-phosphate salvage; pyridoxal 5'-phosphate from pyridoxamine 5'-phosphate: step 1/1. Its pathway is cofactor metabolism; pyridoxal 5'-phosphate salvage; pyridoxal 5'-phosphate from pyridoxine 5'-phosphate: step 1/1. Catalyzes the oxidation of either pyridoxine 5'-phosphate (PNP) or pyridoxamine 5'-phosphate (PMP) into pyridoxal 5'-phosphate (PLP). The chain is Pyridoxine/pyridoxamine 5'-phosphate oxidase from Cereibacter sphaeroides (strain ATCC 17029 / ATH 2.4.9) (Rhodobacter sphaeroides).